The chain runs to 315 residues: MLDIIIAVIIDWIIGDPYWFPHPVIYIGKLIKMLEKLGRRFFKQDKWLLVFGGFIVIIVSSISFLIPFIILQGVKKFQVIYHVINIFFLWTVLAAKSLHKEGKKVYTALEKKDIEDARLKLSYIVGRQTEGLSKKEIIRADVETIAENSSDGIIAPLLFAMLGGAPLAMMYKGINTMDSMLGYMNFKYRYIGFFPAKIDDLFNFIPARVTGIIMCLVSPIIGGNIFYSIKIMLRDRKNHKSPNCAYPEAAAAAASGIMLGGTNIYFGEVVEKPTIGEEKNELSDFHITKTIILMYSSEILFIIIYVIIICFLGKH.

7 helical membrane passes run 1 to 21 (MLDI…YWFP), 50 to 70 (VFGG…PFII), 79 to 99 (VIYH…KSLH), 151 to 171 (DGII…AMMY), 209 to 229 (VTGI…FYSI), 250 to 270 (AAAA…GEVV), and 291 to 311 (IILM…IICF).

It belongs to the CobD/CbiB family.

The protein resides in the cell membrane. Its pathway is cofactor biosynthesis; adenosylcobalamin biosynthesis. Its function is as follows. Converts cobyric acid to cobinamide by the addition of aminopropanol on the F carboxylic group. The sequence is that of Cobalamin biosynthesis protein CobD from Clostridium acetobutylicum (strain ATCC 824 / DSM 792 / JCM 1419 / IAM 19013 / LMG 5710 / NBRC 13948 / NRRL B-527 / VKM B-1787 / 2291 / W).